A 185-amino-acid polypeptide reads, in one-letter code: Peroxynitrite isomerase (185 aa).

The disordered stretch occupies residues 1-21; that stretch reads MHHPARELPFPDALRPGARPA. Positions 34–40 match the GXWXGXG motif; that stretch reads GTWRGTG. His171 contacts heme b.

It belongs to the nitrobindin family. In terms of assembly, homodimer. It depends on heme b as a cofactor.

It carries out the reaction peroxynitrite = nitrate. It participates in nitrogen metabolism. Its function is as follows. Heme-binding protein able to scavenge peroxynitrite and to protect free L-tyrosine against peroxynitrite-mediated nitration, by acting as a peroxynitrite isomerase that converts peroxynitrite to nitrate. Therefore, this protein likely plays a role in peroxynitrite sensing and in the detoxification of reactive nitrogen and oxygen species (RNS and ROS, respectively). Is able to bind nitric oxide (NO) in vitro, but may act as a sensor of peroxynitrite levels in vivo. The chain is Peroxynitrite isomerase from Streptomyces griseus subsp. griseus (strain JCM 4626 / CBS 651.72 / NBRC 13350 / KCC S-0626 / ISP 5235).